Reading from the N-terminus, the 325-residue chain is MKVSIIGSTGRVGRATALCLAEEEAVKTLHLISRRESLEQNIGEVLDMSDALAAKGVSVKLENSADIENVHGSRIVVITAGVPRTADMDRDDLAFQNGVIVAEYARQIARFAPDSIILVVTNPVDVMTYVALKYSGFHPSRVFGLGNHLDSLRLKNYMARHFNVHVSEVHTRVIGQHGPYMVPLISSTSIGGIPIEHYARRDYFSGYRRFDLKKTIEKVINAGSNIISRKGATEYGPAFAISNIVTTILNDERRILTVSTLMEGEIDGIRDVCLGVPVKLGKNGIEGVVPVLMDRDERETFREAASHVRNSTMKVMEFLDEELPL.

7–13 is a binding site for NADP(+); the sequence is GSTGRVG. Substrate-binding residues include Arg84 and Arg90. NADP(+)-binding positions include Asn97 and 120-122; that span reads VTN. Substrate is bound by residues Asn122 and Arg153. Catalysis depends on His177, which acts as the Proton acceptor.

This sequence belongs to the LDH/MDH superfamily.

It carries out the reaction (S)-malate + NADP(+) = oxaloacetate + NADPH + H(+). The catalysed reaction is (S)-malate + NAD(+) = oxaloacetate + NADH + H(+). Functionally, catalyzes the reversible oxidation of malate to oxaloacetate. Can use NAD(+) and NADP(+) with similar specific activity. In Methanothermobacter marburgensis (strain ATCC BAA-927 / DSM 2133 / JCM 14651 / NBRC 100331 / OCM 82 / Marburg) (Methanobacterium thermoautotrophicum), this protein is Malate dehydrogenase.